Consider the following 63-residue polypeptide: Ferredoxin (63 aa).

The 4Fe-4S ferredoxin-type domain maps to 2-29 (KVTVDQDLCIACGTCIDLCPSVFDWDDE). Residues Cys-10, Cys-13, Cys-16, and Cys-55 each coordinate [4Fe-4S] cluster.

The cofactor is [4Fe-4S] cluster.

Ferredoxins are iron-sulfur proteins that transfer electrons in a wide variety of metabolic reactions. This is Ferredoxin from Moorella thermoacetica (Clostridium thermoaceticum).